A 25-amino-acid polypeptide reads, in one-letter code: Caerin-2.4 (25 aa).

As to expression, expressed by the skin parotoid and/or rostral glands.

The protein resides in the secreted. In terms of biological role, antibacterial peptide, that adopts an alpha helical conformation which can disrupt bacterial membranes. Each caerin displays a different antimicrobial specificity. The sequence is that of Caerin-2.4 from Ranoidea caerulea (Green tree frog).